A 272-amino-acid chain; its full sequence is DNA repair protein RecO (272 aa).

It belongs to the RecO family.

In terms of biological role, involved in DNA repair and RecF pathway recombination. The polypeptide is DNA repair protein RecO (Latilactobacillus sakei subsp. sakei (strain 23K) (Lactobacillus sakei subsp. sakei)).